The sequence spans 257 residues: Very long chain fatty acid elongase F (257 aa).

A run of 7 helical transmembrane segments spans residues 10 to 30, 55 to 75, 98 to 118, 135 to 155, 158 to 178, 191 to 211, and 221 to 241; these read IPVVSNPWITMGTLIGYLLFV, IFQILYNGLILVLGVHFLFVL, LICTLYLVNKFVDLVETIFFV, FAMAFFGYLYYCFHGYGGVAF, CLLNTAVHVIMYAYYYLSSIS, ITIAQLVQFAIILLHCTITLA, and LTYGCGSLSAFFAVIFSQFYY.

It belongs to the ELO family. In terms of tissue distribution, highly expressed in females. Little or no expression detected in males.

It localises to the endoplasmic reticulum membrane. It carries out the reaction a very-long-chain acyl-CoA + malonyl-CoA + H(+) = a very-long-chain 3-oxoacyl-CoA + CO2 + CoA. Its pathway is lipid metabolism; fatty acid biosynthesis. In terms of biological role, condensing enzyme that elongates saturated and monounsaturated very long chain fatty acids, to yield products up to 30 carbons in length. May also elongate diunsaturated fatty acids. Important for courtship behavior where it probably has a role in female pheromone biosynthesis. This Drosophila melanogaster (Fruit fly) protein is Very long chain fatty acid elongase F.